The primary structure comprises 229 residues: Peptidase E (229 aa).

Residues Ser120, Asp135, and His157 each act as charge relay system in the active site.

Belongs to the peptidase S51 family.

The protein localises to the cytoplasm. The enzyme catalyses Dipeptidase E catalyzes the hydrolysis of dipeptides Asp-|-Xaa. It does not act on peptides with N-terminal Glu, Asn or Gln, nor does it cleave isoaspartyl peptides.. Hydrolyzes dipeptides containing N-terminal aspartate residues. May play a role in allowing the cell to use peptide aspartate to spare carbon otherwise required for the synthesis of the aspartate family of amino acids. The protein is Peptidase E of Salmonella schwarzengrund (strain CVM19633).